We begin with the raw amino-acid sequence, 509 residues long: Maturase K (509 aa).

This sequence belongs to the intron maturase 2 family. MatK subfamily.

The protein localises to the plastid. The protein resides in the chloroplast. Usually encoded in the trnK tRNA gene intron. Probably assists in splicing its own and other chloroplast group II introns. The sequence is that of Maturase K from Nicotiana alata (Winged tobacco).